Reading from the N-terminus, the 261-residue chain is Signal recognition particle SEC65 subunit (261 aa).

This sequence belongs to the SRP19 family. In terms of assembly, fungal signal recognition particle consists of a 7S RNA molecule (scR1) and at least six protein subunits: SRP72, SRP68, SRP54, SEC65, SRP21 and SRP14.

Its subcellular location is the cytoplasm. Its function is as follows. Signal-recognition-particle assembly has a crucial role in targeting secretory proteins to the rough endoplasmic reticulum membrane. It must be involved intimately in the translocation of a wide variety of protein substrates. This is Signal recognition particle SEC65 subunit (SEC65) from Eremothecium gossypii (strain ATCC 10895 / CBS 109.51 / FGSC 9923 / NRRL Y-1056) (Yeast).